The following is a 369-amino-acid chain: Probable dual-specificity RNA methyltransferase RlmN (369 aa).

The active-site Proton acceptor is E108. The region spanning 114–352 (YPDRATLCIS…CTVRDTKGQE (239 aa)) is the Radical SAM core domain. A disulfide bridge connects residues C121 and C357. C128, C132, and C135 together coordinate [4Fe-4S] cluster. Residues 178–179 (GE), S212, 235–237 (SLH), and N314 contribute to the S-adenosyl-L-methionine site. Catalysis depends on C357, which acts as the S-methylcysteine intermediate.

The protein belongs to the radical SAM superfamily. RlmN family. The cofactor is [4Fe-4S] cluster.

The protein localises to the cytoplasm. It carries out the reaction adenosine(2503) in 23S rRNA + 2 reduced [2Fe-2S]-[ferredoxin] + 2 S-adenosyl-L-methionine = 2-methyladenosine(2503) in 23S rRNA + 5'-deoxyadenosine + L-methionine + 2 oxidized [2Fe-2S]-[ferredoxin] + S-adenosyl-L-homocysteine. It catalyses the reaction adenosine(37) in tRNA + 2 reduced [2Fe-2S]-[ferredoxin] + 2 S-adenosyl-L-methionine = 2-methyladenosine(37) in tRNA + 5'-deoxyadenosine + L-methionine + 2 oxidized [2Fe-2S]-[ferredoxin] + S-adenosyl-L-homocysteine. Specifically methylates position 2 of adenine 2503 in 23S rRNA and position 2 of adenine 37 in tRNAs. This is Probable dual-specificity RNA methyltransferase RlmN from Corynebacterium efficiens (strain DSM 44549 / YS-314 / AJ 12310 / JCM 11189 / NBRC 100395).